A 744-amino-acid chain; its full sequence is NAD(P)H-quinone oxidoreductase subunit 5, chloroplastic (744 aa).

16 consecutive transmembrane segments (helical) span residues 9–29 (WIIPFIPLPVPILIGVGLLFF), 40–60 (WVFPSIFLLTIVMIFSIDLSI), 89–109 (IDSLTSIMSILITTVGILVLI), 125–145 (FTYLSFFNTSMLGLVTSSNLI), 147–167 (VYIFWELVGMCSYLLIGFWFT), 185–205 (GDFGLLLGILGFYWITGSLEF), 219–239 (NEVNIFFVTLCALLLFCGSVA), 258–278 (TPISALIHAATMVAAGIFLVA), 280–300 (LLPLFIVIPSIMSGIALIGII), 327–347 (LGYMILALGMGSYRAALFHLI), 354–374 (ALLFLGSGSIIHSMEAIVGYS), 396–416 (NAFLIGTLSLCGIPPFACFWS), 425–445 (WLYSPIFAIIACSTAGLTAFY), 552–572 (LFSMLVLVLFTFFVGSVGISF), 612–632 (FSVSIAFFGILIASFFYKPVF), and 724–744 (ISSYIFFFLLIFLVICYSIFI).

This sequence belongs to the complex I subunit 5 family. In terms of assembly, NDH is composed of at least 16 different subunits, 5 of which are encoded in the nucleus.

It is found in the plastid. Its subcellular location is the chloroplast thylakoid membrane. It carries out the reaction a plastoquinone + NADH + (n+1) H(+)(in) = a plastoquinol + NAD(+) + n H(+)(out). The catalysed reaction is a plastoquinone + NADPH + (n+1) H(+)(in) = a plastoquinol + NADP(+) + n H(+)(out). Functionally, NDH shuttles electrons from NAD(P)H:plastoquinone, via FMN and iron-sulfur (Fe-S) centers, to quinones in the photosynthetic chain and possibly in a chloroplast respiratory chain. The immediate electron acceptor for the enzyme in this species is believed to be plastoquinone. Couples the redox reaction to proton translocation, and thus conserves the redox energy in a proton gradient. This is NAD(P)H-quinone oxidoreductase subunit 5, chloroplastic (ndhF) from Cicer arietinum (Chickpea).